The sequence spans 662 residues: Neurexin-2-beta (662 aa).

Gly residues predominate over residues 1–10 (MPPGGSGQGG). Residues 1–27 (MPPGGSGQGGCPRRPPALAGPLPPPPP) form a disordered region. Positions 1 to 46 (MPPGGSGQGGCPRRPPALAGPLPPPPPPPPLPLLLGLLLLLGAAEG) are cleaved as a signal peptide. Topologically, residues 47–586 (ARVSSSLSTT…EVIRESSSTT (540 aa)) are extracellular. In terms of domain architecture, Laminin G-like spans 87 to 295 (TTYIFGKGGA…HLRLVGEGPS (209 aa)). Residues Asp139 and Val156 each contribute to the Ca(2+) site. The N-linked (GlcNAc...) asparagine glycan is linked to Asn186. Ile238 and Asn240 together coordinate Ca(2+). O-linked (Xyl...) (heparan sulfate) serine glycosylation occurs at Ser350. Disordered regions lie at residues 408–458 (ATQD…LPPT), 476–496 (LLSP…ATGA), and 530–557 (LGPG…PGFP). A helical membrane pass occupies residues 587 to 607 (GMVVGIVAAAALCILILLYAM). Residues 608–662 (YKYRNRDEGSYQVDQSRNYISNSAQSNGAVVKEKAPAAPKTPSKAKKNKDKEYYV) are Cytoplasmic-facing. The tract at residues 629–662 (NSAQSNGAVVKEKAPAAPKTPSKAKKNKDKEYYV) is disordered.

The protein belongs to the neurexin family. In terms of assembly, interacts (via cytoplasmic C-terminal region) with CASK. Isoform Beta 4b binds alpha-dystroglycan and neuroligins NLGN1, NLGN2 and NLGN3. Interacts with CBLN1, CBLN2 and, less avidly, with CBLN4. Interacts with CLSTN3. O-glycosylated; contains heparan sulfate. Heparan sulfate attachment is required for synapse development by mediating interactions with neuroligins. In terms of tissue distribution, brain (neuronal synapse).

It is found in the presynaptic cell membrane. Functionally, neuronal cell surface protein that may be involved in cell recognition and cell adhesion. This is Neurexin-2-beta (Nrxn2) from Rattus norvegicus (Rat).